We begin with the raw amino-acid sequence, 313 residues long: uncharacterized protein (313 aa).

The protein to M.jannaschii MJ0977 C-terminal region.

This is an uncharacterized protein from Methanocaldococcus jannaschii (strain ATCC 43067 / DSM 2661 / JAL-1 / JCM 10045 / NBRC 100440) (Methanococcus jannaschii).